The sequence spans 100 residues: Large ribosomal subunit protein uL23 (100 aa).

Belongs to the universal ribosomal protein uL23 family. In terms of assembly, part of the 50S ribosomal subunit. Contacts protein L29, and trigger factor when it is bound to the ribosome.

One of the early assembly proteins it binds 23S rRNA. One of the proteins that surrounds the polypeptide exit tunnel on the outside of the ribosome. Forms the main docking site for trigger factor binding to the ribosome. The polypeptide is Large ribosomal subunit protein uL23 (Mycobacterium sp. (strain JLS)).